We begin with the raw amino-acid sequence, 198 residues long: ATP synthase subunit delta (198 aa).

Belongs to the ATPase delta chain family. F-type ATPases have 2 components, F(1) - the catalytic core - and F(0) - the membrane proton channel. F(1) has five subunits: alpha(3), beta(3), gamma(1), delta(1), epsilon(1). F(0) has three main subunits: a(1), b(2) and c(10-14). The alpha and beta chains form an alternating ring which encloses part of the gamma chain. F(1) is attached to F(0) by a central stalk formed by the gamma and epsilon chains, while a peripheral stalk is formed by the delta and b chains.

Its subcellular location is the cell inner membrane. In terms of biological role, f(1)F(0) ATP synthase produces ATP from ADP in the presence of a proton or sodium gradient. F-type ATPases consist of two structural domains, F(1) containing the extramembraneous catalytic core and F(0) containing the membrane proton channel, linked together by a central stalk and a peripheral stalk. During catalysis, ATP synthesis in the catalytic domain of F(1) is coupled via a rotary mechanism of the central stalk subunits to proton translocation. Functionally, this protein is part of the stalk that links CF(0) to CF(1). It either transmits conformational changes from CF(0) to CF(1) or is implicated in proton conduction. The polypeptide is ATP synthase subunit delta (Gluconacetobacter diazotrophicus (strain ATCC 49037 / DSM 5601 / CCUG 37298 / CIP 103539 / LMG 7603 / PAl5)).